The sequence spans 88 residues: UPF0297 protein SPCG_0205 (88 aa).

It belongs to the UPF0297 family.

This Streptococcus pneumoniae (strain CGSP14) protein is UPF0297 protein SPCG_0205.